We begin with the raw amino-acid sequence, 88 residues long: Small ribosomal subunit protein bS20 (88 aa).

Positions 1–27 (MANSKSAKKRALQSEKRRQHNASRRSM) are disordered.

Belongs to the bacterial ribosomal protein bS20 family.

Functionally, binds directly to 16S ribosomal RNA. This Shewanella woodyi (strain ATCC 51908 / MS32) protein is Small ribosomal subunit protein bS20.